We begin with the raw amino-acid sequence, 122 residues long: HLLQFGDLINKIARRNGILYYGFYGCYCGLGGRGRPQDATDRCCFVHDCCYGKVTGCDPKNDIYTYSEENGAIVCGGDNPCKKEICECDRDAAICFRDNLDTYDNKYWFFPRKYCKEESEPC.

Intrachain disulfides connect cysteine 26–cysteine 115, cysteine 28–cysteine 44, cysteine 43–cysteine 95, cysteine 49–cysteine 122, cysteine 50–cysteine 88, cysteine 57–cysteine 81, and cysteine 75–cysteine 86. 3 residues coordinate Ca(2+): tyrosine 27, glycine 29, and glycine 31. Histidine 47 is a catalytic residue. Aspartate 48 lines the Ca(2+) pocket. The active site involves aspartate 89.

May form tetramers. Ca(2+) serves as cofactor. In terms of tissue distribution, expressed by the venom gland.

It localises to the secreted. The enzyme catalyses a 1,2-diacyl-sn-glycero-3-phosphocholine + H2O = a 1-acyl-sn-glycero-3-phosphocholine + a fatty acid + H(+). In terms of biological role, PLA2 catalyzes the calcium-dependent hydrolysis of the 2-acyl groups in 3-sn-phosphoglycerides. In vivo, is non-lethal to mice when intravenously injected up to a concentration of 30 ug, however does show significant edematogenic activity at the injection site. This is Acidic phospholipase A2 from Lachesis acrochorda (Chocoan bushmaster).